The primary structure comprises 293 residues: Pseudouridine-5'-phosphate glycosidase (293 aa).

Catalysis depends on E21, which acts as the Proton donor. Substrate contacts are provided by K81 and V101. D130 provides a ligand contact to Mn(2+). Substrate is bound at residue 132–134 (SQD). The active-site Nucleophile is K151.

It belongs to the pseudouridine-5'-phosphate glycosidase family. As to quaternary structure, homotrimer. Requires Mn(2+) as cofactor.

The enzyme catalyses D-ribose 5-phosphate + uracil = psi-UMP + H2O. Catalyzes the reversible cleavage of pseudouridine 5'-phosphate (PsiMP) to ribose 5-phosphate and uracil. Functions biologically in the cleavage direction, as part of a pseudouridine degradation pathway. This Thermosipho africanus (strain TCF52B) protein is Pseudouridine-5'-phosphate glycosidase.